Here is a 393-residue protein sequence, read N- to C-terminus: NAD(P)H-quinone oxidoreductase subunit H, chloroplastic (393 aa).

This sequence belongs to the complex I 49 kDa subunit family. As to quaternary structure, NDH is composed of at least 16 different subunits, 5 of which are encoded in the nucleus.

The protein localises to the plastid. Its subcellular location is the chloroplast thylakoid membrane. The enzyme catalyses a plastoquinone + NADH + (n+1) H(+)(in) = a plastoquinol + NAD(+) + n H(+)(out). It carries out the reaction a plastoquinone + NADPH + (n+1) H(+)(in) = a plastoquinol + NADP(+) + n H(+)(out). Its function is as follows. NDH shuttles electrons from NAD(P)H:plastoquinone, via FMN and iron-sulfur (Fe-S) centers, to quinones in the photosynthetic chain and possibly in a chloroplast respiratory chain. The immediate electron acceptor for the enzyme in this species is believed to be plastoquinone. Couples the redox reaction to proton translocation, and thus conserves the redox energy in a proton gradient. The chain is NAD(P)H-quinone oxidoreductase subunit H, chloroplastic from Arabis hirsuta (Hairy rock-cress).